The sequence spans 232 residues: UPF0235 protein At5g63440 (232 aa).

The protein belongs to the UPF0235 family. Interacts with CTN.

Its subcellular location is the nucleus speckle. May play a role during early embryonic development. Probably involved in pre-mRNA splicing. The sequence is that of UPF0235 protein At5g63440 from Arabidopsis thaliana (Mouse-ear cress).